Consider the following 254-residue polypeptide: uncharacterized protein (254 aa).

8 helical membrane-spanning segments follow: residues 41–61 (VFVF…IKII), 64–84 (IFQA…EYFF), 91–111 (IYCG…LYIL), 125–145 (ILIG…FVLA), 146–166 (PAAL…LWSF), 172–192 (FILL…IQLL), 204–224 (MLLA…VLTP), and 232–252 (IIMS…LFLL).

It belongs to the TatC family.

It is found in the plastid. It localises to the chloroplast membrane. This is an uncharacterized protein from Porphyra purpurea (Red seaweed).